The following is a 615-amino-acid chain: Chromosomal replication initiator protein DnaA (615 aa).

Positions 1–88 (MSEGQINLAM…RVAVTVDPSA (88 aa)) are domain I, interacts with DnaA modulators. Positions 85–272 (DPSAVPPSAP…PTSGGPDQLN (188 aa)) are disordered. Residues 88–269 (AVPPSAPTEE…STNPTSGGPD (182 aa)) form a domain II region. Low complexity-rich tracts occupy residues 94-112 (PTEEASSTSSPDSSHPAPD) and 173-190 (PSSADPGSPASPAPVAES). Residues 270–486 (QLNPKYTFDT…GALIRVTAFA (217 aa)) are domain III, AAA+ region. Positions 314, 316, 317, and 318 each coordinate ATP. Positions 487–615 (SLNRQSVDLH…QQAHHNHHHL (129 aa)) are domain IV, binds dsDNA.

Belongs to the DnaA family. In terms of assembly, oligomerizes as a right-handed, spiral filament on DNA at oriC.

The protein resides in the cytoplasm. Plays an essential role in the initiation and regulation of chromosomal replication. ATP-DnaA binds to the origin of replication (oriC) to initiate formation of the DNA replication initiation complex once per cell cycle. Binds the DnaA box (a 9 base pair repeat at the origin) and separates the double-stranded (ds)DNA. Forms a right-handed helical filament on oriC DNA; dsDNA binds to the exterior of the filament while single-stranded (ss)DNA is stabiized in the filament's interior. The ATP-DnaA-oriC complex binds and stabilizes one strand of the AT-rich DNA unwinding element (DUE), permitting loading of DNA polymerase. After initiation quickly degrades to an ADP-DnaA complex that is not apt for DNA replication. Binds acidic phospholipids. In Thermobifida fusca (strain YX), this protein is Chromosomal replication initiator protein DnaA.